The chain runs to 149 residues: 3-hydroxyacyl-[acyl-carrier-protein] dehydratase FabZ (149 aa).

Histidine 47 is a catalytic residue.

The protein belongs to the thioester dehydratase family. FabZ subfamily.

The protein localises to the cytoplasm. It carries out the reaction a (3R)-hydroxyacyl-[ACP] = a (2E)-enoyl-[ACP] + H2O. Functionally, involved in unsaturated fatty acids biosynthesis. Catalyzes the dehydration of short chain beta-hydroxyacyl-ACPs and long chain saturated and unsaturated beta-hydroxyacyl-ACPs. The polypeptide is 3-hydroxyacyl-[acyl-carrier-protein] dehydratase FabZ (Thioalkalivibrio sulfidiphilus (strain HL-EbGR7)).